The chain runs to 160 residues: MRLFYRYQDLAPQLVPLDYTTSPKVKVPYELIGSMPELKDNPFRQRIAQVFSQDGDGHMTLENFLDMFSVMSEMAPRDLKAYYAFKIYDFNNDNYICAWDLEQTVTRLTRGELSAEEVTLVCEKVLDEADGDQDGRLSLEDFQNMILRAPDFLSTFHIRI.

EF-hand domains follow at residues 39 to 74 (KDNP…MSEM), 76 to 111 (PRDL…LTRG), and 117 to 152 (EVTL…APDF). Ca(2+) is bound by residues aspartate 89, asparagine 91, aspartate 93, tyrosine 95, aspartate 100, aspartate 130, aspartate 132, aspartate 134, arginine 136, and aspartate 141.

Monomer and homodimer. Interacts with ITGA2B (via C-terminus cytoplasmic tail region); the interaction is stabilized/increased in a calcium and magnesium-dependent manner. Interacts with TMC1. As to expression, expressed in heart, liver and inner ear. In the inner ear, expressed in vestibule and basilar membrane cells. Expressed in megakaryocytes and endothelial cells.

Its function is as follows. Acts as an auxiliary subunit of the sensory mechanoelectrical transduction (MET) channel in hair cells. Plays a role in regulating hair cell MET channel localization and function. The sequence is that of Calcium and integrin-binding family member 3 (Cib3) from Mus musculus (Mouse).